Consider the following 387-residue polypeptide: Pepsin A (387 aa).

Positions 1-16 (MKKLLLLLGLVALSEC) are cleaved as a signal peptide. A propeptide spans 17–61 (LYKVPLVKKKSLRQNLIENGLLKDFLAKHNVNPASKYFPTEAATE) (activation peptide). Positions 75-384 (YFGTIGIGTP…DRGNNRVGLA (310 aa)) constitute a Peptidase A1 domain. Asp-93 is an active-site residue. A disulfide bridge connects residues Cys-106 and Cys-111. Phosphoserine is present on Ser-129. Residues Cys-267 and Cys-271 are joined by a disulfide bond. Residue Asp-276 is part of the active site. Cys-310 and Cys-343 are joined by a disulfide.

Belongs to the peptidase A1 family.

It localises to the secreted. The catalysed reaction is Preferential cleavage: hydrophobic, preferably aromatic, residues in P1 and P1' positions. Cleaves 1-Phe-|-Val-2, 4-Gln-|-His-5, 13-Glu-|-Ala-14, 14-Ala-|-Leu-15, 15-Leu-|-Tyr-16, 16-Tyr-|-Leu-17, 23-Gly-|-Phe-24, 24-Phe-|-Phe-25 and 25-Phe-|-Tyr-26 bonds in the B chain of insulin.. Shows particularly broad specificity; although bonds involving phenylalanine and leucine are preferred, many others are also cleaved to some extent. This is Pepsin A (PGA) from Suncus murinus (Asian house shrew).